A 435-amino-acid chain; its full sequence is Serine--tRNA ligase (435 aa).

241–243 (TAE) is an L-serine binding site. An ATP-binding site is contributed by 272-274 (RAE). Glu295 lines the L-serine pocket. Position 359–362 (359–362 (EISS)) interacts with ATP. Ser395 lines the L-serine pocket.

It belongs to the class-II aminoacyl-tRNA synthetase family. Type-1 seryl-tRNA synthetase subfamily. As to quaternary structure, homodimer. The tRNA molecule binds across the dimer.

The protein resides in the cytoplasm. The catalysed reaction is tRNA(Ser) + L-serine + ATP = L-seryl-tRNA(Ser) + AMP + diphosphate + H(+). It catalyses the reaction tRNA(Sec) + L-serine + ATP = L-seryl-tRNA(Sec) + AMP + diphosphate + H(+). The protein operates within aminoacyl-tRNA biosynthesis; selenocysteinyl-tRNA(Sec) biosynthesis; L-seryl-tRNA(Sec) from L-serine and tRNA(Sec): step 1/1. Catalyzes the attachment of serine to tRNA(Ser). Is also able to aminoacylate tRNA(Sec) with serine, to form the misacylated tRNA L-seryl-tRNA(Sec), which will be further converted into selenocysteinyl-tRNA(Sec). In Haemophilus ducreyi (strain 35000HP / ATCC 700724), this protein is Serine--tRNA ligase.